Consider the following 311-residue polypeptide: Protoheme IX farnesyltransferase (311 aa).

8 helical membrane-spanning segments follow: residues 30–50 (VVQLIVFCAAIGMLLAVPGWP), 55–75 (WGVALAASIGIWLVASAAAAF), 108–128 (FAVLLCAAGMAVLWVWVNALT), 129–149 (MWLTFATFVGYAVIYTVLLKP), 153–173 (QNIVIGGASGAMPPVLGWAAM), 182–202 (WILCLIIFLWTPPHFWALALY), 233–253 (FVLFAATLLPFVYGMSGWFYL), and 287–307 (IWHLSLLFAALLLDHYLGPLL).

It belongs to the UbiA prenyltransferase family. Protoheme IX farnesyltransferase subfamily.

Its subcellular location is the cell inner membrane. The catalysed reaction is heme b + (2E,6E)-farnesyl diphosphate + H2O = Fe(II)-heme o + diphosphate. It participates in porphyrin-containing compound metabolism; heme O biosynthesis; heme O from protoheme: step 1/1. Functionally, converts heme B (protoheme IX) to heme O by substitution of the vinyl group on carbon 2 of heme B porphyrin ring with a hydroxyethyl farnesyl side group. This is Protoheme IX farnesyltransferase from Methylibium petroleiphilum (strain ATCC BAA-1232 / LMG 22953 / PM1).